The following is a 226-amino-acid chain: MKQNKPKFQVGDIVVVIMYGTVGTITKVHQIDKHYLYEVNHNEVLYFESSIQLYKDYEGVIVDMEKLDIEYEFLIGDVVYVKDYGKELFRIIGHRTEIWRYLEDGWEDIIYELTRLKDGEWLETEEEDLTLVLRKYEMDQFVHQLLFVHYVGETGHEIGEDIASSALLQFEGGDEDQDTLHILAVSIVDELLDIYNDYKILYEMFQDEEYKDMMMFVLESLKEHFS.

This is an uncharacterized protein from Bacillus subtilis (strain 168).